A 190-amino-acid polypeptide reads, in one-letter code: MAEMIEAKNLRNGQTIFGPNKEILLVLENTFNKTAMRQGIVKTKVKNLRTGAIVWLEFTGDKLEQVIIDKKKMNFLYKDGNNFVFMDQKDYSQIEINEKKLEWEKNFITEEIEVTVITYQDEILGVNLPDLVPIEVEFAEDAIQGNTANMARKKARLVTGYELDVPQFINTGDKIVIATVDGNYRERFNK.

This sequence belongs to the elongation factor P family.

The protein resides in the cytoplasm. It functions in the pathway protein biosynthesis; polypeptide chain elongation. Involved in peptide bond synthesis. Stimulates efficient translation and peptide-bond synthesis on native or reconstituted 70S ribosomes in vitro. Probably functions indirectly by altering the affinity of the ribosome for aminoacyl-tRNA, thus increasing their reactivity as acceptors for peptidyl transferase. The chain is Elongation factor P (efp) from Mycoplasma genitalium (strain ATCC 33530 / DSM 19775 / NCTC 10195 / G37) (Mycoplasmoides genitalium).